The following is a 150-amino-acid chain: D-aminoacyl-tRNA deacylase (150 aa).

Residues 137–138 (GP) carry the Gly-cisPro motif, important for rejection of L-amino acids motif.

It belongs to the DTD family. Homodimer.

It is found in the cytoplasm. It catalyses the reaction glycyl-tRNA(Ala) + H2O = tRNA(Ala) + glycine + H(+). The catalysed reaction is a D-aminoacyl-tRNA + H2O = a tRNA + a D-alpha-amino acid + H(+). Its function is as follows. An aminoacyl-tRNA editing enzyme that deacylates mischarged D-aminoacyl-tRNAs. Also deacylates mischarged glycyl-tRNA(Ala), protecting cells against glycine mischarging by AlaRS. Acts via tRNA-based rather than protein-based catalysis; rejects L-amino acids rather than detecting D-amino acids in the active site. By recycling D-aminoacyl-tRNA to D-amino acids and free tRNA molecules, this enzyme counteracts the toxicity associated with the formation of D-aminoacyl-tRNA entities in vivo and helps enforce protein L-homochirality. This chain is D-aminoacyl-tRNA deacylase, found in Listeria monocytogenes serotype 4b (strain CLIP80459).